Reading from the N-terminus, the 1339-residue chain is MDSLIRHCSEEIALDGSSGCSIDRLWEFAANFFFRQGIVQNLDDNYKTFVWPLILKEDGIEVWIEDEDATGLRSKMQEIPWNYQDITIELRARIRLFASEDRQWLTLTYKTKTDSKIQPLAFELLSCISRYRQEGVDRIQLCKETKQEPRSVYGRIQALEDASLISKVAINRSRAQTALLVLKRFESENSTINETVAQVSGKQIYNTEKIRSNICDAVQSSRNGICRHVDARAMVNLNHSRWERRYYARQVTYLHNNGYLRKCLTFVPNSPERCIRCLQFIKPYISSLDATEDDVDFTEVDDIPEDDELEEEEPLLPSKEEFDASFLQPLADVGPTLPQWSRFRPLEFQCFVLIRNAGFHGVITLQILSGLTGIRFNKPLFKLLGSLVEHRSSVPNHLSHMSITRFEDKTKKSRQYRYFTLQSQLNRLIRDGIPAETISKLLPHVHSLAGEFSPIDSSLFLNSLHHKGNMESNAEVSPDGMTLLPRKRGRPRKSANISVTSSPIRPSKNENNLPSLAISPVSEGFIQNATISTPSTSSNLSIAGSLTPSKTSRIYRGLAPLKNPEFNEDHVKKAEHLEPLLNVSSSVPSKNFTVSSPDHLKYGNTSSLQVSDSQSSIDLDSSFHYPVSVDSQLSHSTGSLMANFSSPTKKRRLESVDFIFLQRKGLILSYLVEQNGAFEISRKMFEDLADLKVRRNPETSRTVMDRRTFQQTLEKLMQEKKVRKLVIATNNGLGKLVRKDIVVQYDMKPDSPRFQQLRAQITTPEIEKQSTPEILKDVDVDFLKRNTSLSRRKSMPAEIKRHKESSETKPVDKEEVKKNEKEKDDPMRLAQQLLESLAPDFALHENTQQKSPVEKPKKLRKDRYASVEEFDYFSSTEHASKRSVKRFKNDFTSDEDETLIRAVVITQIYYGGTNRLIKWEAVQKCFPNRDIYALTRRYLSIRQHTKFKGLQQFLSENWQQMYKDAVSRKDLMPYPDSVDDFDPTPYVKASCRPYMISSSNLATTRLPRDLVDVYETYNIEVVKQETNFREMIFDPSLSVASKMNAYCDMPFTMPLSLNDKQNNEGDENCEKGQLFDAKSTIKSIVAIPDATYDARFSQERLMQYPEDILIAAHQELLDKRIITRVNSENSRLQPGRNFQFTEKFASSLKSPLPPFLLSQAKRFNKFLLEGFQNHKNHLFEETSNSGTLACILDLLSQGKLQISIVGSKFNEYGLSEGYRTRLLEHDNINVTLVLSGKESESKKNYGVTEKLATPPSHEPRLWLNGKCELIEMIWMNIEQSIVYQLLRKPGILRSQLTNLLFPGLEPREFNEVLDYFIAAGAAIEKDGLYLNHNYLFKLT.

A disordered region spans residues 470–515; sequence MESNAEVSPDGMTLLPRKRGRPRKSANISVTSSPIRPSKNENNLPS. The segment at residues 485–497 is a DNA-binding region (a.T hook); that stretch reads PRKRGRPRKSANI. Polar residues predominate over residues 495–514; that stretch reads ANISVTSSPIRPSKNENNLP. S595 and S596 each carry phosphoserine. Residues 791–826 form a disordered region; the sequence is RRKSMPAEIKRHKESSETKPVDKEEVKKNEKEKDDP. Basic and acidic residues predominate over residues 798–826; that stretch reads EIKRHKESSETKPVDKEEVKKNEKEKDDP.

As to quaternary structure, component of the TFIIIC complex including sfc1, sfc3, sfc4, sfc6 and sfc7. The subunits are organized in two globular domains, tauA and tauB, connected by a proteolysis-sensitive and flexible linker. Interacts with sfc1, sfc4 and sfc6.

Its subcellular location is the nucleus envelope. Functionally, TFIIIC mediates tRNA and 5S RNA gene activation by binding to intragenic promoter elements. Upstream of the transcription start site, TFIIIC assembles the initiation complex TFIIIB-TFIIIC-tDNA, which is sufficient for RNA polymerase III recruitment and function. Part of the tauB domain of TFIIIC that binds boxB DNA promoter sites of tRNA and similar genes. Cooperates with sfc6 in DNA binding. Localizes to chromatin insulator sequence without recruiting RNA polymerase III and plays a role in nuclear organization. This chain is Transcription factor tau subunit sfc3, found in Schizosaccharomyces pombe (strain 972 / ATCC 24843) (Fission yeast).